A 134-amino-acid chain; its full sequence is Transcription antitermination protein NusB (134 aa).

It belongs to the NusB family.

Its function is as follows. Involved in transcription antitermination. Required for transcription of ribosomal RNA (rRNA) genes. Binds specifically to the boxA antiterminator sequence of the ribosomal RNA (rrn) operons. The sequence is that of Transcription antitermination protein NusB from Halalkalibacterium halodurans (strain ATCC BAA-125 / DSM 18197 / FERM 7344 / JCM 9153 / C-125) (Bacillus halodurans).